The sequence spans 486 residues: tRNA sulfurtransferase (486 aa).

One can recognise a THUMP domain in the interval 61–165 (AILIDVLGRI…NDHMMLIKAR (105 aa)). ATP is bound by residues 183-184 (LI), Lys-265, Gly-287, and Gln-296. A disulfide bridge connects residues Cys-344 and Cys-456. The Rhodanese domain occupies 404–481 (LSANDVILDI…NGFANVRVFA (78 aa)). Residue Cys-456 is the Cysteine persulfide intermediate of the active site.

Belongs to the ThiI family.

It is found in the cytoplasm. It catalyses the reaction [ThiI sulfur-carrier protein]-S-sulfanyl-L-cysteine + a uridine in tRNA + 2 reduced [2Fe-2S]-[ferredoxin] + ATP + H(+) = [ThiI sulfur-carrier protein]-L-cysteine + a 4-thiouridine in tRNA + 2 oxidized [2Fe-2S]-[ferredoxin] + AMP + diphosphate. It carries out the reaction [ThiS sulfur-carrier protein]-C-terminal Gly-Gly-AMP + S-sulfanyl-L-cysteinyl-[cysteine desulfurase] + AH2 = [ThiS sulfur-carrier protein]-C-terminal-Gly-aminoethanethioate + L-cysteinyl-[cysteine desulfurase] + A + AMP + 2 H(+). It participates in cofactor biosynthesis; thiamine diphosphate biosynthesis. Functionally, catalyzes the ATP-dependent transfer of a sulfur to tRNA to produce 4-thiouridine in position 8 of tRNAs, which functions as a near-UV photosensor. Also catalyzes the transfer of sulfur to the sulfur carrier protein ThiS, forming ThiS-thiocarboxylate. This is a step in the synthesis of thiazole, in the thiamine biosynthesis pathway. The sulfur is donated as persulfide by IscS. This chain is tRNA sulfurtransferase, found in Mannheimia succiniciproducens (strain KCTC 0769BP / MBEL55E).